The chain runs to 427 residues: mRNA cap guanine-N(7) methyltransferase (427 aa).

Residues 1–79 are disordered; it reads MSLNYEQNAA…EPETEAASGA (79 aa). Phosphoserine is present on residues serine 22, serine 24, serine 29, serine 46, and serine 48. Residues 44–57 show a composition bias toward basic and acidic residues; it reads HVSKSPREYYDEPG. Residues 103–411 enclose the mRNA cap 0 methyltransferase domain; sequence SKIFFMRNFN…LYLVCAFKKC (309 aa). Residue 112-113 participates in mRNA binding; sequence NN. S-adenosyl-L-methionine is bound by residues lysine 116, cysteine 143, aspartate 165, aspartate 202, glutamine 225, and tyrosine 230.

The protein belongs to the class I-like SAM-binding methyltransferase superfamily. mRNA cap 0 methyltransferase family.

The protein localises to the nucleus. It carries out the reaction a 5'-end (5'-triphosphoguanosine)-ribonucleoside in mRNA + S-adenosyl-L-methionine = a 5'-end (N(7)-methyl 5'-triphosphoguanosine)-ribonucleoside in mRNA + S-adenosyl-L-homocysteine. In terms of biological role, mRNA-capping methyltransferase that methylates the N7 position of the added guanosine to the 5'-cap structure of mRNAs. Binds RNA containing 5'-terminal GpppC. The polypeptide is mRNA cap guanine-N(7) methyltransferase (Drosophila melanogaster (Fruit fly)).